Here is a 284-residue protein sequence, read N- to C-terminus: Acetylglutamate kinase (284 aa).

Substrate-binding positions include 66-67, arginine 88, and asparagine 179; that span reads GG.

This sequence belongs to the acetylglutamate kinase family. ArgB subfamily.

The protein resides in the cytoplasm. It catalyses the reaction N-acetyl-L-glutamate + ATP = N-acetyl-L-glutamyl 5-phosphate + ADP. The protein operates within amino-acid biosynthesis; L-arginine biosynthesis; N(2)-acetyl-L-ornithine from L-glutamate: step 2/4. In terms of biological role, catalyzes the ATP-dependent phosphorylation of N-acetyl-L-glutamate. The chain is Acetylglutamate kinase from Actinobacillus pleuropneumoniae serotype 5b (strain L20).